A 240-amino-acid polypeptide reads, in one-letter code: MSSILKSSTGSNHSSTSNHSSINNISQLSGSHGVEQQQLRPVLTLDASTAKLMYQTSQEMSSYIQQVANEPTIGLFHVQDHIRRNIPKNVELKKNIKALGEKIEEKSFDIDYSTKTIKTFSEIQTFSNISSLLQQSIERANKLVNNKSLLFVNSQMAAPSSSKTFSSFQQQHKIYQQQQTNLTPSKPTLSNDKTNDNNNNNNNLNFVEKIEKEEKIEKEDEGKEKDEKEKDDKDLNEKIN.

2 disordered regions span residues 1-33 and 163-240; these read MSSI…GSHG and KTFS…EKIN. 2 stretches are compositionally biased toward low complexity: residues 7-26 and 163-179; these read SSTG…NNIS and KTFS…QQQQ. A compositionally biased stretch (polar residues) spans 180–190; that stretch reads TNLTPSKPTLS. Over residues 196–205 the composition is skewed to low complexity; the sequence is DNNNNNNNLN. The segment covering 208–240 has biased composition (basic and acidic residues); that stretch reads EKIEKEEKIEKEDEGKEKDEKEKDDKDLNEKIN. The stretch at 211-239 forms a coiled coil; sequence EKEEKIEKEDEGKEKDEKEKDDKDLNEKI.

It belongs to the BORCS8 family.

Its subcellular location is the lysosome membrane. May participate in the coupling of lysosomes to microtubule plus-end-directed kinesin motor. The polypeptide is BLOC-1-related complex subunit 8 homolog (Dictyostelium discoideum (Social amoeba)).